The sequence spans 206 residues: MMLTLALPKGRLAEESIDLMISKGWLSSKPDPNSKELIYNDPKGKIRILLVRSQDVATYVEQCAADAGISGWDVLKEGGYDLATPLDLKIGKCRLSLAAPNGFTLEAHHRKIRVATKYPNLAREFFFLKGLSCEIFKLYGSIELAPLVGLSDCIVDLVSTGGTLKANGLKELDIILESSARLVFNRSSLYGKRKEAVEFMDSLSKI.

Belongs to the ATP phosphoribosyltransferase family. Short subfamily. In terms of assembly, heteromultimer composed of HisG and HisZ subunits.

It is found in the cytoplasm. The catalysed reaction is 1-(5-phospho-beta-D-ribosyl)-ATP + diphosphate = 5-phospho-alpha-D-ribose 1-diphosphate + ATP. The protein operates within amino-acid biosynthesis; L-histidine biosynthesis; L-histidine from 5-phospho-alpha-D-ribose 1-diphosphate: step 1/9. Its function is as follows. Catalyzes the condensation of ATP and 5-phosphoribose 1-diphosphate to form N'-(5'-phosphoribosyl)-ATP (PR-ATP). Has a crucial role in the pathway because the rate of histidine biosynthesis seems to be controlled primarily by regulation of HisG enzymatic activity. The protein is ATP phosphoribosyltransferase of Leptospira interrogans serogroup Icterohaemorrhagiae serovar copenhageni (strain Fiocruz L1-130).